The primary structure comprises 85 residues: Phosphocarrier protein HPr (85 aa).

In terms of domain architecture, HPr spans 1-85 (MYSKDVEIIA…HLVALIPTLE (85 aa)). H15 functions as the Pros-phosphohistidine intermediate in the catalytic mechanism.

The protein belongs to the HPr family.

It localises to the cytoplasm. Functionally, general (non sugar-specific) component of the phosphoenolpyruvate-dependent sugar phosphotransferase system (sugar PTS). This major carbohydrate active-transport system catalyzes the phosphorylation of incoming sugar substrates concomitantly with their translocation across the cell membrane. The phosphoryl group from phosphoenolpyruvate (PEP) is transferred to the phosphoryl carrier protein HPr by enzyme I. Phospho-HPr then transfers it to the PTS EIIA domain. This is Phosphocarrier protein HPr (ptsH) from Haemophilus influenzae (strain ATCC 51907 / DSM 11121 / KW20 / Rd).